A 624-amino-acid polypeptide reads, in one-letter code: Prickle planar cell polarity protein 3 (624 aa).

Basic residues predominate over residues 1–12; it reads MFARGSRRRRSG. A disordered region spans residues 1–26; it reads MFARGSRRRRSGRAPPEAEDPARGQP. The region spanning 74-182 is the PET domain; that stretch reads SDFQRHSISD…TVRIFPVTIT (109 aa). 3 LIM zinc-binding domains span residues 184–249, 250–309, and 310–373; these read AICE…CLRP, RCQA…RHAE, and YCDG…SETT. The disordered stretch occupies residues 371–617; it reads ETTAPGPGRR…SHPVMPRQTR (247 aa). The span at 383 to 409 shows a compositional bias: low complexity; it reads SAGTVTTPLTTSTASFSATEGTSETAS. The span at 447–458 shows a compositional bias: pro residues; it reads PEPPTESPGHPA. Phosphoserine is present on residues Ser-475 and Ser-491. A compositionally biased stretch (basic residues) spans 509–541; sequence SCHHHHHHRRRRQRHRRRGSHHHHHHPGRHGHH. Residues 545 to 564 are compositionally biased toward low complexity; the sequence is LGSGSDSGSCSSSPSSPSSE. A compositionally biased stretch (polar residues) spans 587–601; the sequence is RTTQDTSTETFNSPA.

Belongs to the prickle / espinas / testin family. As to quaternary structure, interacts with VANGL2 via its C-terminus. The VANGL2-dependent membrane recruitment of PRICKLE3 is a prerequisite for its polarization. Interacts with WTIP. WTIP is involved in the recruitment of PRICKLE3 to the basal body. Interacts with MT-ATP8, a component of the mitochondrial complex V. As to expression, widely expressed.

The protein resides in the cytoplasm. Its subcellular location is the cell membrane. The protein localises to the mitochondrion. Its function is as follows. Involved in the planar cell polarity (PCP) pathway that is essential for the polarization of epithelial cells during morphogenetic processes, including gastrulation and neurulation. PCP is maintained by two molecular modules, the global and the core modules, PRICKLE3 being part of the core module. Distinct complexes of the core module segregate to opposite sides of the cell, where they interact with the opposite complex in the neighboring cell at or near the adherents junctions. Involved in the organization of the basal body. Involved in cilia growth and positioning. Required for proper assembly, stability, and function of mitochondrial membrane ATP synthase (mitochondrial complex V). The sequence is that of Prickle planar cell polarity protein 3 from Mus musculus (Mouse).